Here is a 441-residue protein sequence, read N- to C-terminus: uncharacterized protein (441 aa).

11 helical membrane passes run 62–82, 88–108, 112–132, 154–174, 192–212, 224–244, 247–267, 312–332, 335–355, 363–383, and 399–419; these read FLSLGFFLVIIVLVGIAFEIG, LILTLALEVYFFSTALLKLFG, IALTLHFFEPLLVFILLIIAL, ALLHFTPLFNLLEGMASLLVV, WMFFILLNASSAISMSLYLLY, ALMIGFSLATVIVISIYGVAS, ANLSEASLMFLYIAYTVYMVC, IVLFMVAAAKTVAPSVFATFA, ISVMYAVTRILPAIQNNIIFL, QGMWSILSPCILIAVYTNLLL, and ILCSAEIWRWVSAILTLLLYA.

The protein resides in the membrane. This is an uncharacterized protein from Schizosaccharomyces pombe (strain 972 / ATCC 24843) (Fission yeast).